A 319-amino-acid polypeptide reads, in one-letter code: Ribosomal RNA small subunit methyltransferase H (319 aa).

S-adenosyl-L-methionine is bound by residues 37–39 (GGH), Asp-56, Leu-90, Asp-104, and Gln-111.

The protein belongs to the methyltransferase superfamily. RsmH family.

The protein resides in the cytoplasm. It catalyses the reaction cytidine(1402) in 16S rRNA + S-adenosyl-L-methionine = N(4)-methylcytidine(1402) in 16S rRNA + S-adenosyl-L-homocysteine + H(+). Its function is as follows. Specifically methylates the N4 position of cytidine in position 1402 (C1402) of 16S rRNA. The polypeptide is Ribosomal RNA small subunit methyltransferase H (Nocardioides sp. (strain ATCC BAA-499 / JS614)).